A 513-amino-acid chain; its full sequence is ATP synthase subunit alpha (513 aa).

169–176 (GDRQTGKT) is an ATP binding site.

This sequence belongs to the ATPase alpha/beta chains family. As to quaternary structure, F-type ATPases have 2 components, CF(1) - the catalytic core - and CF(0) - the membrane proton channel. CF(1) has five subunits: alpha(3), beta(3), gamma(1), delta(1), epsilon(1). CF(0) has three main subunits: a(1), b(2) and c(9-12). The alpha and beta chains form an alternating ring which encloses part of the gamma chain. CF(1) is attached to CF(0) by a central stalk formed by the gamma and epsilon chains, while a peripheral stalk is formed by the delta and b chains.

Its subcellular location is the cell inner membrane. The catalysed reaction is ATP + H2O + 4 H(+)(in) = ADP + phosphate + 5 H(+)(out). Its function is as follows. Produces ATP from ADP in the presence of a proton gradient across the membrane. The alpha chain is a regulatory subunit. The polypeptide is ATP synthase subunit alpha (Shewanella oneidensis (strain ATCC 700550 / JCM 31522 / CIP 106686 / LMG 19005 / NCIMB 14063 / MR-1)).